A 350-amino-acid chain; its full sequence is MKKSVKVVLGIETSCDETAVAIVNSNKEVLSHKILSQKEHAEYGGVVPEIASRAHINYLYDLTVSCIEESQLSLNNIDAVAVTSGPGLIGGLIVGVMIAKGIASVTGKPIIEINHLEAHALIVRMFYEINFPFLLLIISGGHCQFLIVYNVGCYHKLGSSLDDSLGEVFDKVAKMLNLGYPGGPVIEKKSLSGDSKSFVLPRALTGRCGCDFSFSGLKTAVRNIIMNHEYIDNKLICDISASFQECVGDILVNRINNAIAMSKAIDKRIDKLVVTGGVAANKLLRERMLRCASDNNFEIFYPPSKLCTDNGIMIGWAGIENLVKDYVSNLDFAPKARWPLESLRSNIMKE.

The Fe cation site is built by H115 and H119. Residues 137–141 (IISGG), D170, G183, and N281 contribute to the substrate site. Residue D309 coordinates Fe cation.

This sequence belongs to the KAE1 / TsaD family. It depends on Fe(2+) as a cofactor.

It localises to the cytoplasm. It carries out the reaction L-threonylcarbamoyladenylate + adenosine(37) in tRNA = N(6)-L-threonylcarbamoyladenosine(37) in tRNA + AMP + H(+). In terms of biological role, required for the formation of a threonylcarbamoyl group on adenosine at position 37 (t(6)A37) in tRNAs that read codons beginning with adenine. Is involved in the transfer of the threonylcarbamoyl moiety of threonylcarbamoyl-AMP (TC-AMP) to the N6 group of A37, together with TsaE and TsaB. TsaD likely plays a direct catalytic role in this reaction. In Ehrlichia canis (strain Jake), this protein is tRNA N6-adenosine threonylcarbamoyltransferase.